Reading from the N-terminus, the 1478-residue chain is Zinc finger protein 518A (1478 aa).

4 consecutive C2H2-type zinc fingers follow at residues 152–174 (FPCEMCSFSASDFQIFKQHRKTH), 209–231 (FQCEECRFFTQDVGTFVQHIHRH), 236–258 (YKCGKCHHLCFTKGELQKHLRVH), and 264–287 (FTCHYCSYGAIHKDQLVRHVITLH). A disordered region spans residues 355–394 (TQTKSEDQSQEQLNEEKGGRQHCEDGDKPIESGSEKATVL). Residue Lys358 forms a Glycyl lysine isopeptide (Lys-Gly) (interchain with G-Cter in SUMO2) linkage. Basic and acidic residues predominate over residues 368–388 (NEEKGGRQHCEDGDKPIESGS). Glycyl lysine isopeptide (Lys-Gly) (interchain with G-Cter in SUMO2) cross-links involve residues Lys390 and Lys428. The disordered stretch occupies residues 464 to 484 (PSPALQPNTEKESTANLPPQA). Lys518 is covalently cross-linked (Glycyl lysine isopeptide (Lys-Gly) (interchain with G-Cter in SUMO2)). A Phosphoserine modification is found at Ser652. The tract at residues 656 to 694 (VCENLQRESSNKTVTQQSTSDSDTTSPLRKESSNSDSLL) is disordered. Low complexity predominate over residues 670-681 (TQQSTSDSDTTS). Glycyl lysine isopeptide (Lys-Gly) (interchain with G-Cter in SUMO2) cross-links involve residues Lys707, Lys792, Lys882, Lys895, Lys987, Lys1008, Lys1041, Lys1055, Lys1078, Lys1180, and Lys1441. The segment at 1444-1466 (FNCWFCGRVFDNQDVWAGHGQRH) adopts a C2H2-type 5 zinc-finger fold.

This sequence belongs to the krueppel C2H2-type zinc-finger protein family.

The protein resides in the nucleus. Through its association with the EHMT1-EHMT2/G9A and PRC2/EED-EZH2 histone methyltransferase complexes may function in gene silencing, regulating repressive post-translational methylation of histone tails at promoters of target genes. The sequence is that of Zinc finger protein 518A (Znf518a) from Rattus norvegicus (Rat).